A 225-amino-acid chain; its full sequence is Class E basic helix-loop-helix protein 23 (225 aa).

The interval 35–104 (EAARGYGTPG…PREQRSLRLS (70 aa)) is disordered. The bHLH domain maps to 100–154 (SLRLSINARERRRMHDLNDALDGLRAVIPYAHSPSVRKLSKIATLLLAKNYILMQ).

The protein localises to the nucleus. Its function is as follows. May function as transcriptional repressor. May modulate the expression of genes required for the differentiation and/or maintenance of pancreatic and neuronal cell types. May be important for rod bipolar cell maturation. This is Class E basic helix-loop-helix protein 23 (BHLHE23) from Homo sapiens (Human).